The chain runs to 264 residues: 3-methyl-2-oxobutanoate hydroxymethyltransferase (264 aa).

Residues aspartate 45 and aspartate 84 each coordinate Mg(2+). Residues aspartate 45–serine 46, aspartate 84, and lysine 112 contribute to the 3-methyl-2-oxobutanoate site. Glutamate 114 is a binding site for Mg(2+). Glutamate 181 serves as the catalytic Proton acceptor.

The protein belongs to the PanB family. In terms of assembly, homodecamer; pentamer of dimers. It depends on Mg(2+) as a cofactor.

The protein localises to the cytoplasm. It catalyses the reaction 3-methyl-2-oxobutanoate + (6R)-5,10-methylene-5,6,7,8-tetrahydrofolate + H2O = 2-dehydropantoate + (6S)-5,6,7,8-tetrahydrofolate. The protein operates within cofactor biosynthesis; (R)-pantothenate biosynthesis; (R)-pantoate from 3-methyl-2-oxobutanoate: step 1/2. Catalyzes the reversible reaction in which hydroxymethyl group from 5,10-methylenetetrahydrofolate is transferred onto alpha-ketoisovalerate to form ketopantoate. This Pectobacterium atrosepticum (strain SCRI 1043 / ATCC BAA-672) (Erwinia carotovora subsp. atroseptica) protein is 3-methyl-2-oxobutanoate hydroxymethyltransferase.